The following is a 76-amino-acid chain: MTEDLSQLSFEDALAQLEEIVRQLEGGQLRLQDAIASYERGAALRRYCDTKLNEADARVQAIIQRADGALETKSMD.

It belongs to the XseB family. As to quaternary structure, heterooligomer composed of large and small subunits.

It localises to the cytoplasm. The enzyme catalyses Exonucleolytic cleavage in either 5'- to 3'- or 3'- to 5'-direction to yield nucleoside 5'-phosphates.. Functionally, bidirectionally degrades single-stranded DNA into large acid-insoluble oligonucleotides, which are then degraded further into small acid-soluble oligonucleotides. The polypeptide is Exodeoxyribonuclease 7 small subunit (Gluconacetobacter diazotrophicus (strain ATCC 49037 / DSM 5601 / CCUG 37298 / CIP 103539 / LMG 7603 / PAl5)).